The primary structure comprises 159 residues: Cytochrome c-type biogenesis protein CcmE (159 aa).

Residues 1 to 8 (MNPRRKKR) lie on the Cytoplasmic side of the membrane. A helical; Signal-anchor for type II membrane protein membrane pass occupies residues 9–29 (LLVIVAVLFGIGASIGLVLYA). Over 30-159 (LQENINLFYT…KPKYNLDSGN (130 aa)) the chain is Periplasmic. Heme contacts are provided by H130 and Y134.

The protein belongs to the CcmE/CycJ family.

It localises to the cell inner membrane. Functionally, heme chaperone required for the biogenesis of c-type cytochromes. Transiently binds heme delivered by CcmC and transfers the heme to apo-cytochromes in a process facilitated by CcmF and CcmH. In Pseudoalteromonas translucida (strain TAC 125), this protein is Cytochrome c-type biogenesis protein CcmE.